A 466-amino-acid chain; its full sequence is MPHSYDYDAIVIGSGPGGEGAAMGLVKQGARVAVIERYQNVGGGCTHWGTIPSKALRHAVSRIIEFNQNPLYSDHSRLLRSSFADILNHADNVINQQTRMRQGFYERNHCEILQGNARFVDEHTLALDCPDGSVETLTAEKFVIACGSRPYHPTDVDFTHPRIYDSDSILSMHHEPRHVLIYGAGVIGCEYASIFRGMDVKVDLINTRDRLLAFLDQEMSDSLSYHFWNSGVVIRHNEEYEKIEGCDDGVIMHLKSGKKLKADCLLYANGRTGNTDSLALQNIGLETDSRGQLKVNSMYQTAQPHVYAVGDVIGYPSLASAAYDQGRIAAQALVKGEANAHLIEDIPTGIYTIPEISSVGKTEQQLTAMKVPYEVGRAQFKHLARAQIVGMNVGTLKILFHRETKEILGIHCFGERAAEIIHIGQAIMEQKGGGNTIEYFVNTTFNYPTMAEAYRVAALNGLNRLF.

Position 36–45 (36–45) interacts with FAD; that stretch reads ERYQNVGGGC.

It belongs to the class-I pyridine nucleotide-disulfide oxidoreductase family. Homooligomer; probable homooctamer. FAD serves as cofactor.

The protein resides in the cytoplasm. It catalyses the reaction NAD(+) + NADPH = NADH + NADP(+). Its function is as follows. Conversion of NADPH, generated by peripheral catabolic pathways, to NADH, which can enter the respiratory chain for energy generation. This chain is Soluble pyridine nucleotide transhydrogenase, found in Escherichia coli O6:H1 (strain CFT073 / ATCC 700928 / UPEC).